The primary structure comprises 399 residues: Argininosuccinate synthase (399 aa).

9–17 (AYSGGLDTS) is a binding site for ATP. Residue Tyr85 coordinates L-citrulline. Gly115 provides a ligand contact to ATP. L-aspartate contacts are provided by Thr117, Asn121, and Asp122. Asn121 is an L-citrulline binding site. Arg125, Ser173, Glu258, and Tyr270 together coordinate L-citrulline.

Belongs to the argininosuccinate synthase family. Type 1 subfamily. As to quaternary structure, homotetramer.

It is found in the cytoplasm. The enzyme catalyses L-citrulline + L-aspartate + ATP = 2-(N(omega)-L-arginino)succinate + AMP + diphosphate + H(+). It participates in amino-acid biosynthesis; L-arginine biosynthesis; L-arginine from L-ornithine and carbamoyl phosphate: step 2/3. The polypeptide is Argininosuccinate synthase (Streptococcus gordonii (strain Challis / ATCC 35105 / BCRC 15272 / CH1 / DL1 / V288)).